The chain runs to 94 residues: Co-chaperonin GroES (94 aa).

It belongs to the GroES chaperonin family. In terms of assembly, heptamer of 7 subunits arranged in a ring. Interacts with the chaperonin GroEL.

The protein resides in the cytoplasm. In terms of biological role, together with the chaperonin GroEL, plays an essential role in assisting protein folding. The GroEL-GroES system forms a nano-cage that allows encapsulation of the non-native substrate proteins and provides a physical environment optimized to promote and accelerate protein folding. GroES binds to the apical surface of the GroEL ring, thereby capping the opening of the GroEL channel. The sequence is that of Co-chaperonin GroES from Ehrlichia chaffeensis (strain ATCC CRL-10679 / Arkansas).